The chain runs to 146 residues: MPIALAGGGFFRVSAPPARTPYPEAMSYAEVLGMTILDASPDLTRVALTVTEAGLNMHGTAHGGLIFSLADEAFAVISNLDAQAVAAETHMSFFRAAREGERLVAVATPERVGRTLATYRIEVRRGEEGEVLALFLGTVSRREKQS.

Belongs to the thioesterase PaaI family.

This chain is Putative esterase DR_2321, found in Deinococcus radiodurans (strain ATCC 13939 / DSM 20539 / JCM 16871 / CCUG 27074 / LMG 4051 / NBRC 15346 / NCIMB 9279 / VKM B-1422 / R1).